The primary structure comprises 276 residues: MRFRARITSKRFIELFIQVSSTVAKLAKVCVLRVCPDRLYFCPMGLLGEAQLWGEMRRDVFHHFCMEGASQEFNEICLELMSEHLARAVKNAGNASSLKLQLTNKQRPCLTLVVELASCPGHTRAVVHDLPVRVLPRRRWKDCTEPHVRGSDVSVYLPALKTLKNMVERMANVGSHVLVEANLNGRMNLTVETDRVTIKSYFKNLGNPPNAVLCMSQGRDPETMVQVRVDNRKLLQCFDGHQINPTMALCNILSNTLLHLVLVHEDISLQYFIPAS.

The protein belongs to the HUS1 family. In terms of assembly, interacts with RAD1 and RAD9B.

This Mus musculus (Mouse) protein is Checkpoint protein HUS1B (Hus1b).